The primary structure comprises 382 residues: Apolipoprotein A-IV (382 aa).

A signal peptide spans 1 to 20 (MFLKAVVLSLALVAVTGARA). 13 tandem repeats follow at residues 33–54 (DYFSQLGSNAKKAVEHLQKSEL), 60–81 (TLFQDKLGEVNTYTEDLQKKLV), 82–103 (PFATELHERLTKDSEKLKEEIR), 115–136 (PHATEVSQKIGDNVRELQQRLG), 137–158 (PFTGGLRTQVNTQVQQLQRQLK), 159–180 (PYAERMESVLRQNIRNLEASVA), 181–202 (PYADEFKAKIDQNVEELKGSLT), 203–224 (PYAEELKAKIDQNVEELRRSLA), 225–246 (PYAQDVQEKLNHQLEGLAFQMK), 247–268 (KQAEELKAKISANADELRQKLV), 269–286 (PVAENVHGHLKGNTEGLQ), 287–308 (KSLLELRSHLDQQVEEFRLKVE), and 309–330 (PYGETFNKALVQQVEDLRQKLG). Residues 33-330 (DYFSQLGSNA…QVEDLRQKLG (298 aa)) form a 13 X 22 AA approximate tandem repeats region. Positions 361–382 (EASQGQSQALPAQEKAQAPLEG) are disordered.

Belongs to the apolipoprotein A1/A4/E family. In terms of assembly, homodimer. In terms of tissue distribution, secreted in plasma.

The protein resides in the secreted. May have a role in chylomicrons and VLDL secretion and catabolism. Required for efficient activation of lipoprotein lipase by ApoC-II; potent activator of LCAT. Apoa-IV is a major component of HDL and chylomicrons. In Sus scrofa (Pig), this protein is Apolipoprotein A-IV (APOA4).